Reading from the N-terminus, the 96-residue chain is NADH-ubiquinone oxidoreductase chain 4L (96 aa).

A run of 3 helical transmembrane segments spans residues 1 to 21 (MPTT…SLQR), 27 to 47 (LLLT…LWAL), and 57 to 77 (APLI…SLMI).

It belongs to the complex I subunit 4L family.

Its subcellular location is the mitochondrion membrane. It catalyses the reaction a ubiquinone + NADH + 5 H(+)(in) = a ubiquinol + NAD(+) + 4 H(+)(out). In terms of biological role, core subunit of the mitochondrial membrane respiratory chain NADH dehydrogenase (Complex I) which catalyzes electron transfer from NADH through the respiratory chain, using ubiquinone as an electron acceptor. Part of the enzyme membrane arm which is embedded in the lipid bilayer and involved in proton translocation. In Petromyzon marinus (Sea lamprey), this protein is NADH-ubiquinone oxidoreductase chain 4L (MT-ND4L).